The chain runs to 649 residues: tRNA-guanine(15) transglycosylase (649 aa).

The active-site Nucleophile is aspartate 88. 2 residues coordinate substrate: aspartate 123 and alanine 194. Zn(2+) is bound by residues cysteine 280, cysteine 282, and cysteine 285. The PUA domain occupies 573–648 (NYRIVIDSSV…VAATLRGGIK (76 aa)).

This sequence belongs to the archaeosine tRNA-ribosyltransferase family. It depends on Zn(2+) as a cofactor.

The catalysed reaction is guanosine(15) in tRNA + 7-cyano-7-deazaguanine = 7-cyano-7-carbaguanosine(15) in tRNA + guanine. It participates in tRNA modification; archaeosine-tRNA biosynthesis. Its function is as follows. Exchanges the guanine residue with 7-cyano-7-deazaguanine (preQ0) at position 15 in the dihydrouridine loop (D-loop) of archaeal tRNAs. The protein is tRNA-guanine(15) transglycosylase of Methanococcus maripaludis (strain C5 / ATCC BAA-1333).